Consider the following 407-residue polypeptide: Argininosuccinate synthase (407 aa).

ATP contacts are provided by residues 11 to 19 and Ala-38; that span reads AYSGGLDTS. L-citrulline contacts are provided by Tyr-91 and Ser-96. Gly-121 provides a ligand contact to ATP. 3 residues coordinate L-aspartate: Thr-123, Asn-127, and Asp-128. Asn-127 serves as a coordination point for L-citrulline. The L-citrulline site is built by Arg-131, Ser-181, Ser-190, Glu-266, and Tyr-278.

It belongs to the argininosuccinate synthase family. Type 1 subfamily. In terms of assembly, homotetramer.

It is found in the cytoplasm. It catalyses the reaction L-citrulline + L-aspartate + ATP = 2-(N(omega)-L-arginino)succinate + AMP + diphosphate + H(+). The protein operates within amino-acid biosynthesis; L-arginine biosynthesis; L-arginine from L-ornithine and carbamoyl phosphate: step 2/3. The sequence is that of Argininosuccinate synthase from Campylobacter concisus (strain 13826).